The primary structure comprises 261 residues: Thiazole synthase (261 aa).

Lysine 101 acts as the Schiff-base intermediate with DXP in catalysis. 1-deoxy-D-xylulose 5-phosphate contacts are provided by residues glycine 162, 188-189 (AG), and 210-211 (NT).

This sequence belongs to the ThiG family. Homotetramer. Forms heterodimers with either ThiH or ThiS.

It localises to the cytoplasm. The catalysed reaction is [ThiS sulfur-carrier protein]-C-terminal-Gly-aminoethanethioate + 2-iminoacetate + 1-deoxy-D-xylulose 5-phosphate = [ThiS sulfur-carrier protein]-C-terminal Gly-Gly + 2-[(2R,5Z)-2-carboxy-4-methylthiazol-5(2H)-ylidene]ethyl phosphate + 2 H2O + H(+). It participates in cofactor biosynthesis; thiamine diphosphate biosynthesis. In terms of biological role, catalyzes the rearrangement of 1-deoxy-D-xylulose 5-phosphate (DXP) to produce the thiazole phosphate moiety of thiamine. Sulfur is provided by the thiocarboxylate moiety of the carrier protein ThiS. In vitro, sulfur can be provided by H(2)S. This Azoarcus sp. (strain BH72) protein is Thiazole synthase.